A 650-amino-acid chain; its full sequence is uncharacterized protein (650 aa).

This is an uncharacterized protein from Caenorhabditis elegans.